The chain runs to 371 residues: Aminomethyltransferase (371 aa).

This sequence belongs to the GcvT family. The glycine cleavage system is composed of four proteins: P, T, L and H.

It carries out the reaction N(6)-[(R)-S(8)-aminomethyldihydrolipoyl]-L-lysyl-[protein] + (6S)-5,6,7,8-tetrahydrofolate = N(6)-[(R)-dihydrolipoyl]-L-lysyl-[protein] + (6R)-5,10-methylene-5,6,7,8-tetrahydrofolate + NH4(+). In terms of biological role, the glycine cleavage system catalyzes the degradation of glycine. This is Aminomethyltransferase from Cellvibrio japonicus (strain Ueda107) (Pseudomonas fluorescens subsp. cellulosa).